We begin with the raw amino-acid sequence, 349 residues long: MRVADFSFELPDSLIARHPLAERHGSRLLVLDGPSGALAHKQFTDLLDYLRPGDLMVFNNTRVIPARLFGQKASGGKLEVLVERVLDSHRVLAHVRASKAPKEGAVILIDGGGEAEMVARHDTLFELRFTEEVLPLLERVGHMPLPPYIDRPDDGADRERYQTVYAERAGAVAAPTAGLHFDQALLDKIAAKGVERAFVTLHVGAGTFQPVRVDKIEDHHMHKEWLEVSQDVVDAIEACRARGGRVVAVGTTSVRSLESAARDGVLKAFSGDTDIFIYPGRPFHVVDALVTNFHLPESTLLMLVSAFAGYPETMAAYAAAVEQGYRFFSYGDAMFITRNPAPRGPEDQA.

The protein belongs to the QueA family. Monomer.

It is found in the cytoplasm. It catalyses the reaction 7-aminomethyl-7-carbaguanosine(34) in tRNA + S-adenosyl-L-methionine = epoxyqueuosine(34) in tRNA + adenine + L-methionine + 2 H(+). It functions in the pathway tRNA modification; tRNA-queuosine biosynthesis. Functionally, transfers and isomerizes the ribose moiety from AdoMet to the 7-aminomethyl group of 7-deazaguanine (preQ1-tRNA) to give epoxyqueuosine (oQ-tRNA). The polypeptide is S-adenosylmethionine:tRNA ribosyltransferase-isomerase (Pseudomonas putida (strain W619)).